A 403-amino-acid polypeptide reads, in one-letter code: MTPRRQQRPKGQLAKAKQAKQPLARSRRPRRRRRAAITQNNLMMLSEPGLSFLKCAFASPDSNTDPGKGIPDNFEGKVLSQKNVYTETGVNFSGATTQNVDTYIIVLPTPGVAFWRCIKTATAPAQPAALTTTDVFTAVPFPDFTSLFGTTATNRADQVAAFRYASMNFGLYPTCNSTQYNGGISVWKGAVQMSTTQYPLDTTPESSQLVHAITGLESALKVGDENYSESFIDGVFTQSINGNAEFPFYPILEGVQTLPGQNVTVAQAGMPFSLDAGAATVAGFTGIGGMDAIFIKVTAAAGSVNTATIKTWACIEYRPNTNTALYKYAHDSPAEDIIALQQYRKVYKSLPVAVRAKLNANMWERVKRLLKAGLVAASYVPGPVGGIATGVQHIGDLIAELSF.

The tract at residues 1–32 is disordered; that stretch reads MTPRRQQRPKGQLAKAKQAKQPLARSRRPRRR. Residues 9-24 show a composition bias toward low complexity; sequence PKGQLAKAKQAKQPLA. An intrachain disulfide couples Cys55 to Cys314. Asp61 is a catalytic residue. Asp157, Glu217, Glu245, and Gly269 together coordinate Ca(2+).

It belongs to the peptidase A6 family. In terms of processing, capsid protein alpha autocatalytically maturates into capsid protein beta and peptide gamma.

It localises to the virion. The catalysed reaction is Hydrolysis of an asparaginyl bond involved in the maturation of the structural protein of the virus, typically -Asn-|-Ala- or -Asn-|-Phe-.. Functionally, capsid protein alpha self-assembles to form an icosahedral procapsid with a T=3 symmetry, about 30 nm in diameter, and consisting of 60 capsid proteins trimers. In addition, 240 calcium ions are incorporated per capsid during assembly. The capsid encapsulates the two genomic RNAs. Capsid maturation occurs via autoproteolytic cleavage of capsid protein alpha generating capsid protein beta and the membrane-active peptide gamma. Membrane-permeabilizing peptide produced by virus maturation, thereby creating the infectious virion. After endocytosis into the host cell, peptide gamma is probably exposed in endosomes, where it permeabilizes the endosomal membrane, facilitating translocation of viral capsid or RNA into the cytoplasm. Involved in specific recognition and packaging of viral RNA during assembly. This is Capsid protein alpha (alpha) from Hepialidae (ghost moths).